A 344-amino-acid chain; its full sequence is Phenylalanine--tRNA ligase alpha subunit (344 aa).

Glutamate 256 is a binding site for Mg(2+).

It belongs to the class-II aminoacyl-tRNA synthetase family. Phe-tRNA synthetase alpha subunit type 1 subfamily. As to quaternary structure, tetramer of two alpha and two beta subunits. The cofactor is Mg(2+).

It localises to the cytoplasm. It catalyses the reaction tRNA(Phe) + L-phenylalanine + ATP = L-phenylalanyl-tRNA(Phe) + AMP + diphosphate + H(+). This chain is Phenylalanine--tRNA ligase alpha subunit, found in Bacillus licheniformis (strain ATCC 14580 / DSM 13 / JCM 2505 / CCUG 7422 / NBRC 12200 / NCIMB 9375 / NCTC 10341 / NRRL NRS-1264 / Gibson 46).